The sequence spans 411 residues: Serpin A3-2 (411 aa).

The N-terminal stretch at 1–24 is a signal peptide; it reads MRAERTSFLLALGLLVAGIRSVHC. N-linked (GlcNAc...) asparagine glycans are attached at residues Asn100, Asn180, Asn230, and Asn264.

The protein belongs to the serpin family. In terms of assembly, homodimer.

It is found in the cytoplasmic vesicle. The protein localises to the secretory vesicle. It localises to the chromaffin granule. Its subcellular location is the secreted. Functionally, serine protease inhibitor. The sequence is that of Serpin A3-2 from Bos taurus (Bovine).